Reading from the N-terminus, the 243-residue chain is Proteasome subunit beta (243 aa).

The tract at residues 1-40 (MRTPMNNDISGRPDSLNGDRSDVFSPELGEFPNADDRAND) is disordered. Positions 1 to 49 (MRTPMNNDISGRPDSLNGDRSDVFSPELGEFPNADDRANDIGDMETKTG) are cleaved as a propeptide — removed in mature form; by autocatalysis. Threonine 50 functions as the Nucleophile in the catalytic mechanism.

It belongs to the peptidase T1B family. As to quaternary structure, the 20S proteasome core is composed of 14 alpha and 14 beta subunits that assemble into four stacked heptameric rings, resulting in a barrel-shaped structure. The two inner rings, each composed of seven catalytic beta subunits, are sandwiched by two outer rings, each composed of seven alpha subunits. The catalytic chamber with the active sites is on the inside of the barrel. Has a gated structure, the ends of the cylinder being occluded by the N-termini of the alpha-subunits. Is capped at one or both ends by the proteasome regulatory ATPase, PAN.

The protein resides in the cytoplasm. The catalysed reaction is Cleavage of peptide bonds with very broad specificity.. With respect to regulation, the formation of the proteasomal ATPase PAN-20S proteasome complex, via the docking of the C-termini of PAN into the intersubunit pockets in the alpha-rings, triggers opening of the gate for substrate entry. Interconversion between the open-gate and close-gate conformations leads to a dynamic regulation of the 20S proteasome proteolysis activity. Its function is as follows. Component of the proteasome core, a large protease complex with broad specificity involved in protein degradation. This chain is Proteasome subunit beta, found in Haloquadratum walsbyi (strain DSM 16790 / HBSQ001).